A 660-amino-acid chain; its full sequence is Bifunctional polymyxin resistance protein ArnA (660 aa).

The interval 1-304 is formyltransferase ArnAFT; sequence MKTVVFAYHD…TLGLVQGSRL (304 aa). 86–88 is a (6R)-10-formyltetrahydrofolate binding site; that stretch reads HLI. Residue His104 is the Proton donor; for formyltransferase activity of the active site. (6R)-10-formyltetrahydrofolate is bound by residues Arg114 and 136–140; that span reads VKRAD. Residues 314-660 are dehydrogenase ArnADH; the sequence is RRTRVLILGV…RTVDLTDKPS (347 aa). NAD(+)-binding positions include Asp347 and 368 to 369; that span reads DI. UDP-alpha-D-glucuronate contacts are provided by residues Ala393, Tyr398, and 432 to 433; that span reads TS. Catalysis depends on Glu434, which acts as the Proton acceptor; for decarboxylase activity. Residues Arg460, Asn492, 526–535, and Tyr613 each bind UDP-alpha-D-glucuronate; that span reads KLIDGGKQKR. The active-site Proton donor; for decarboxylase activity is Arg619.

It in the N-terminal section; belongs to the Fmt family. UDP-L-Ara4N formyltransferase subfamily. The protein in the C-terminal section; belongs to the NAD(P)-dependent epimerase/dehydratase family. UDP-glucuronic acid decarboxylase subfamily. Homohexamer, formed by a dimer of trimers.

The catalysed reaction is UDP-alpha-D-glucuronate + NAD(+) = UDP-beta-L-threo-pentopyranos-4-ulose + CO2 + NADH. It carries out the reaction UDP-4-amino-4-deoxy-beta-L-arabinose + (6R)-10-formyltetrahydrofolate = UDP-4-deoxy-4-formamido-beta-L-arabinose + (6S)-5,6,7,8-tetrahydrofolate + H(+). It participates in nucleotide-sugar biosynthesis; UDP-4-deoxy-4-formamido-beta-L-arabinose biosynthesis; UDP-4-deoxy-4-formamido-beta-L-arabinose from UDP-alpha-D-glucuronate: step 1/3. The protein operates within nucleotide-sugar biosynthesis; UDP-4-deoxy-4-formamido-beta-L-arabinose biosynthesis; UDP-4-deoxy-4-formamido-beta-L-arabinose from UDP-alpha-D-glucuronate: step 3/3. Its pathway is bacterial outer membrane biogenesis; lipopolysaccharide biosynthesis. Bifunctional enzyme that catalyzes the oxidative decarboxylation of UDP-glucuronic acid (UDP-GlcUA) to UDP-4-keto-arabinose (UDP-Ara4O) and the addition of a formyl group to UDP-4-amino-4-deoxy-L-arabinose (UDP-L-Ara4N) to form UDP-L-4-formamido-arabinose (UDP-L-Ara4FN). The modified arabinose is attached to lipid A and is required for resistance to polymyxin and cationic antimicrobial peptides. The polypeptide is Bifunctional polymyxin resistance protein ArnA (Escherichia coli O81 (strain ED1a)).